The sequence spans 397 residues: Zinc finger transcription factor family protein 30 (397 aa).

Residues 1-40 (MKLEDDKIHSPTNTEEEGYGSDVEVENGTDISGSKGGSGV) are disordered. The segment covering 14 to 27 (TEEEGYGSDVEVEN) has biased composition (acidic residues). 3 consecutive C2H2-type zinc fingers follow at residues 51–74 (FRCS…MQAH), 78–102 (YKCT…KQHH), and 107–125 (YMCR…LHIH).

The protein localises to the nucleus. The polypeptide is Zinc finger transcription factor family protein 30 (ztf-30) (Caenorhabditis elegans).